The chain runs to 739 residues: Interleukin-17 receptor D (739 aa).

Residues M1–A16 form the signal peptide. Over C17–R299 the chain is Extracellular. N-linked (GlcNAc...) asparagine glycans are attached at residues N19, N55, N62, N80, N137, N171, N206, and N277. The helical transmembrane segment at A300–M320 threads the bilayer. At C321–L739 the chain is on the cytoplasmic side. The region spanning R355–S509 is the SEFIR domain. 2 disordered regions span residues G614–P635 and V650–S719. Residues S667–L702 show a composition bias toward low complexity.

As to quaternary structure, interacts with MAP3K7. Self-associates. Interacts with FGFR1, FGFR2 and phosphorylated MAP2K1 or MAP2K2. Associates with a MAP2K1/2-MAPK1/3 complex. In terms of tissue distribution, expressed in umbilical vein endothelial cells and in several highly vascularized tissues such as kidney, colon, skeletal muscle, heart and small intestine. Highly expressed in ductal epithelial cells of salivary glands, seminal vesicles and the collecting tubules of the kidney. Isoform 1 is also highly expressed in both fetal and adult brain, pituitary, tonsils, spleen, adenoids, fetal kidney, liver, testes and ovary. Isoform 1 is also expressed at moderate levels in primary aortic endothelial cells and adrenal medulla, and at low levels in adrenal cortex. Isoform 4 is specifically and highly expressed in pituitary, fetal brain and umbilical vein endothelial cells.

It localises to the golgi apparatus membrane. Its subcellular location is the cell membrane. It is found in the cytoplasm. Functionally, feedback inhibitor of fibroblast growth factor mediated Ras-MAPK signaling and ERK activation. Regulates the nuclear ERK signaling pathway by spatially blocking nuclear translocation of activated ERK without inhibiting cytoplasmic phosphorylation of ERK. Mediates JNK activation and may be involved in apoptosis. May inhibit FGF-induced FGFR1 tyrosine phosphorylation. Might have a role in the early stages of fate specification of GnRH-secreting neurons. Inhibits TGFB-induced epithelial-to-mesenchymal transition in lens epithelial cells. The polypeptide is Interleukin-17 receptor D (IL17RD) (Homo sapiens (Human)).